We begin with the raw amino-acid sequence, 287 residues long: tRNA (guanine(9)-N1)-methyltransferase (287 aa).

Residues 1–27 (MSDTSDLVDGKWQRLPPVPEGMSKSQW) form a disordered region. One can recognise an SAM-dependent MTase TRM10-type domain in the interval 79–272 (EPRVNRDQVA…SVIPSRKLDP (194 aa)). S-adenosyl-L-methionine is bound by residues 179 to 180 (LT), Gly199, 203 to 207 (DKNRH), Cys211, Leu225, and 237 to 239 (KVL). Asp203 serves as the catalytic Proton acceptor. The span at 268–278 (RKLDPVKEKEQ) shows a compositional bias: basic and acidic residues. Residues 268 to 287 (RKLDPVKEKEQQQQQQQQQQ) are disordered.

The protein belongs to the class IV-like SAM-binding methyltransferase superfamily. TRM10 family. Monomer.

The protein localises to the cytoplasm. It localises to the nucleus. It carries out the reaction guanosine(9) in tRNA + S-adenosyl-L-methionine = N(1)-methylguanosine(9) in tRNA + S-adenosyl-L-homocysteine + H(+). S-adenosyl-L-methionine-dependent guanine N(1)-methyltransferase that catalyzes the formation of N(1)-methylguanine at position 9 (m1G9) in cytoplasmic tRNA. The chain is tRNA (guanine(9)-N1)-methyltransferase from Candida glabrata (strain ATCC 2001 / BCRC 20586 / JCM 3761 / NBRC 0622 / NRRL Y-65 / CBS 138) (Yeast).